Here is a 267-residue protein sequence, read N- to C-terminus: Acyl-[acyl-carrier-protein]--UDP-N-acetylglucosamine O-acyltransferase (267 aa).

It belongs to the transferase hexapeptide repeat family. LpxA subfamily. Homotrimer.

The protein resides in the cytoplasm. The catalysed reaction is a (3R)-hydroxyacyl-[ACP] + UDP-N-acetyl-alpha-D-glucosamine = a UDP-3-O-[(3R)-3-hydroxyacyl]-N-acetyl-alpha-D-glucosamine + holo-[ACP]. Its pathway is glycolipid biosynthesis; lipid IV(A) biosynthesis; lipid IV(A) from (3R)-3-hydroxytetradecanoyl-[acyl-carrier-protein] and UDP-N-acetyl-alpha-D-glucosamine: step 1/6. Its function is as follows. Involved in the biosynthesis of lipid A, a phosphorylated glycolipid that anchors the lipopolysaccharide to the outer membrane of the cell. The chain is Acyl-[acyl-carrier-protein]--UDP-N-acetylglucosamine O-acyltransferase from Cupriavidus taiwanensis (strain DSM 17343 / BCRC 17206 / CCUG 44338 / CIP 107171 / LMG 19424 / R1) (Ralstonia taiwanensis (strain LMG 19424)).